A 231-amino-acid polypeptide reads, in one-letter code: Large ribosomal subunit protein uL1 (231 aa).

This sequence belongs to the universal ribosomal protein uL1 family. In terms of assembly, part of the 50S ribosomal subunit.

Functionally, binds directly to 23S rRNA. The L1 stalk is quite mobile in the ribosome, and is involved in E site tRNA release. In terms of biological role, protein L1 is also a translational repressor protein, it controls the translation of the L11 operon by binding to its mRNA. In Macrococcus caseolyticus (strain JCSC5402) (Macrococcoides caseolyticum), this protein is Large ribosomal subunit protein uL1.